The sequence spans 319 residues: Cobalamin biosynthesis protein CobD (319 aa).

4 helical membrane passes run 55 to 75 (AVMW…VLAL), 78 to 98 (EIHP…VLAG), 153 to 173 (VDGI…LAMA), and 296 to 316 (LMWV…CLLV).

Belongs to the CobD/CbiB family.

It localises to the cell membrane. It participates in cofactor biosynthesis; adenosylcobalamin biosynthesis. Functionally, converts cobyric acid to cobinamide by the addition of aminopropanol on the F carboxylic group. This Citrobacter koseri (strain ATCC BAA-895 / CDC 4225-83 / SGSC4696) protein is Cobalamin biosynthesis protein CobD.